A 348-amino-acid chain; its full sequence is Macrophage-capping protein (348 aa).

The residue at position 1 (Met-1) is an N-acetylmethionine. The Gelsolin-like 1 repeat unit spans residues 27 to 75 (EKLKPVPVAQENQGVFFSGDSYLVLHNGPEEVSHLHLWIGQQSSRDEQG). Residues 137 to 146 (KKLYQVKGKK) carry the Nuclear localization signal motif. 2 Gelsolin-like repeats span residues 148–188 (IRAT…LERN) and 261–307 (MNLT…KERQ). Phosphoserine is present on Ser-337.

It belongs to the villin/gelsolin family. Interacts with NUP62. Interacts with NUTF2 and RAN; involved in CAPG nuclear import. The N-terminus is blocked. In terms of tissue distribution, macrophages and macrophage-like cells.

The protein localises to the nucleus. It is found in the cytoplasm. It localises to the melanosome. Its subcellular location is the cell projection. The protein resides in the lamellipodium. The protein localises to the ruffle. In terms of biological role, calcium-sensitive protein which reversibly blocks the barbed ends of actin filaments but does not sever preformed actin filaments. May play an important role in macrophage function. May play a role in regulating cytoplasmic and/or nuclear structures through potential interactions with actin. May bind DNA. This is Macrophage-capping protein (CAPG) from Homo sapiens (Human).